Consider the following 290-residue polypeptide: L-cysteine S-thiosulfotransferase subunit SoxA (290 aa).

Positions 1 to 26 are cleaved as a signal peptide; that stretch reads MPRFTKTKGTLAATALGLALAGAAFA. Residues Asp-78 and Asp-81 each coordinate Zn(2+). Residues 78–171 form the Cytochrome c domain; it reads DDFDNPAMVF…DMLSLISLQS (94 aa). Positions 106, 109, 110, and 143 each coordinate heme c. A Zn(2+)-binding site is contributed by His-190. 3 residues coordinate heme c: Cys-206, Cys-209, and His-210. Position 247 (Arg-247) interacts with substrate. Cys-251 serves as a coordination point for heme c. The Cysteine persulfide intermediate role is filled by Cys-251. Asp-266 serves as a coordination point for Zn(2+).

Belongs to the SoxA family. Heterodimer of SoxA and SoxX. Heme c serves as cofactor. The cofactor is Zn(2+). In terms of processing, cysteine persulfide at Cys-251.

The protein resides in the periplasm. It catalyses the reaction L-cysteinyl-[SoxY protein] + thiosulfate + 2 Fe(III)-[cytochrome c] = S-sulfosulfanyl-L-cysteinyl-[SoxY protein] + 2 Fe(II)-[cytochrome c] + 2 H(+). It carries out the reaction S-sulfanyl-L-cysteinyl-[SoxY protein] + thiosulfate + 2 Fe(III)-[cytochrome c] = S-(2-sulfodisulfanyl)-L-cysteinyl-[SoxY protein] + 2 Fe(II)-[cytochrome c] + 2 H(+). Functionally, C-type diheme cytochrome, which is part of the SoxAX cytochrome complex involved in sulfur oxidation. The SoxAX complex catalyzes the formation of a heterodisulfide bond between the conserved cysteine residue on a sulfur carrier SoxYZ complex subunit SoxY and thiosulfate or other inorganic sulfur substrates. This leads to the liberation of two electrons, which may be transferred from the SoxAX complex to another cytochrome c that then channels them into the respiratory electron transport chain. Some electrons may be used for reductive CO(2) fixation. In Paracoccus pantotrophus (Thiosphaera pantotropha), this protein is L-cysteine S-thiosulfotransferase subunit SoxA.